The chain runs to 312 residues: Photosystem I assembly protein Ycf4 (312 aa).

The next 3 membrane-spanning stretches (helical) occupy residues 42–62, 91–111, and 113–133; these read WAFIVCLGSIGFLLTGISSYF, IILFFPQGLVMCFYGILGLFL, and FYLWFSIFLNIGAGFNEIYIY.

It belongs to the Ycf4 family.

The protein resides in the plastid. The protein localises to the chloroplast thylakoid membrane. Functionally, seems to be required for the assembly of the photosystem I complex. This is Photosystem I assembly protein Ycf4 from Pleurastrum terricola (Filamentous green alga).